Here is a 75-residue protein sequence, read N- to C-terminus: Small ribosomal subunit protein bS18 (75 aa).

This sequence belongs to the bacterial ribosomal protein bS18 family. Part of the 30S ribosomal subunit. Forms a tight heterodimer with protein bS6.

Functionally, binds as a heterodimer with protein bS6 to the central domain of the 16S rRNA, where it helps stabilize the platform of the 30S subunit. The chain is Small ribosomal subunit protein bS18 from Acinetobacter baumannii (strain AB307-0294).